A 640-amino-acid polypeptide reads, in one-letter code: Chitin elicitor receptor kinase 1 (640 aa).

Positions 1–31 (MKFQMKMKSELCRTYKYWLILLVLWLSGVTQ) are cleaved as a signal peptide. Topologically, residues 32–248 (RETGVLIVDA…GTVHWRSNVG (217 aa)) are extracellular. Cystine bridges form between C43/C104, C49/C166, and C102/C164. LysM domains follow at residues 53-98 (AYYR…NIYL), 113-160 (FSYT…SLTI), and 179-227 (STYV…KAAN). Residues 119–125 (TNDTAEK) and 148–154 (DLSSIYS) each bind chitin. The helical transmembrane segment at 249 to 269 (IIVGVVVGGIVLAVLLLFALI) threads the bilayer. Over 270–640 (FGFKHFRRRK…SQPPSGNDQL (371 aa)) the chain is Cytoplasmic. Residues 286–308 (MQQSGLLSSSSMAGSKPSRSGST) are disordered. A compositionally biased stretch (low complexity) spans 289 to 307 (SGLLSSSSMAGSKPSRSGS). The Protein kinase domain maps to 330–612 (FSLAKKIGQG…RFAVVQLMTL (283 aa)). Residues 336-344 (IGQGGFASV) and K357 contribute to the ATP site. Residue D452 is the Proton acceptor of the active site.

It belongs to the protein kinase superfamily. Ser/Thr protein kinase family.

It localises to the cell membrane. It carries out the reaction L-seryl-[protein] + ATP = O-phospho-L-seryl-[protein] + ADP + H(+). The catalysed reaction is L-threonyl-[protein] + ATP = O-phospho-L-threonyl-[protein] + ADP + H(+). Lysin motif (LysM) receptor kinase required as a cell surface receptor for chitin elicitor (chitooligosaccharides) signaling leading to innate immunity in response to biotic stresses. The CERK1, MEKK1a/b, MKK1a/b/c and MPK4a/b proteins are involved in pathogen defense. The pathway induces rapid growth inhibition, cell wall depositions and accumulation of defense-related transcripts. This protein is required for response to chitin. Is able to complement the A.thaliana cerk1 mutant. The chain is Chitin elicitor receptor kinase 1 from Physcomitrium patens (Spreading-leaved earth moss).